The chain runs to 822 residues: Coiled-coil domain-containing protein 175 (822 aa).

Coiled-coil stretches lie at residues 129–164 (IIEISQIKRKIETMNNEVKFLTNKISELKSMNEVLG), 223–397 (IEKQ…KQMM), and 510–537 (HLIETLKEQLAQDKKDYVKKEERLIEEL).

This is Coiled-coil domain-containing protein 175 (Ccdc175) from Mus musculus (Mouse).